Consider the following 580-residue polypeptide: MAAKSDGAAAVAGPGPEGPAGADRGGAGGRGEVAAGIAGPGPVEAGCPGPRYELRDCCWVLCALLVFFSDGATDLWLAASYYLQGQSTYFGLTLLFVLLPSLVVQLLSFRWFVYDYSEPTGTPGPAVSTKDSDIVGAAISTKDSAVAFRTKEGSPELVPRPAPSSAGAYRRRCCRLCVWLLQTLVHLLQLGQVWRYLRALYLGLQSRWRGERLRRHFYWRMLFESADVSMLRLLETFLRSAPQLVLQLSLLVHRGREPELLTALSISASLVSLAWTLASYQKVLRDSRDDKRPLSYKGAVVQVLWHLFTIAARTLAFALFASVYRLYFGIFIVAHWCIMTFWVIQGETDFCMSKWEEIIYNMVVGIIYIFCWFNVKEGRSRRRVTLYYCIVLLENAALTGFWYSSRNFSTDFYSLILVCVVASSFALGIFFMCVYYCLLHPNGPMLGPQAPGCIFPEAPGPCGPPADAITSPPRSLPRTTGAERDGAAVGGERAGTPTPPVFQVRPGLPPTPVARPLRTEGPVIRIDLPRKKYPAWDAHFIDRRLRKTILALEYSSPATPRLQYRSMGTSQELLEYETTV.

Residues 1-22 show a composition bias toward low complexity; the sequence is MAAKSDGAAAVAGPGPEGPAGA. The tract at residues 1–28 is disordered; sequence MAAKSDGAAAVAGPGPEGPAGADRGGAG. 8 helical membrane-spanning segments follow: residues 59 to 79, 89 to 109, 260 to 280, 303 to 323, 326 to 346, 355 to 375, 384 to 404, and 415 to 435; these read WVLCALLVFFSDGATDLWLAA, YFGLTLLFVLLPSLVVQLLSF, LLTALSISASLVSLAWTLASY, VLWHLFTIAARTLAFALFASV, LYFGIFIVAHWCIMTFWVIQG, WEEIIYNMVVGIIYIFCWFNV, VTLYYCIVLLENAALTGFWYS, and LILVCVVASSFALGIFFMCVY. Residues 470–516 are disordered; the sequence is TSPPRSLPRTTGAERDGAAVGGERAGTPTPPVFQVRPGLPPTPVARP.

Belongs to the XK family.

It localises to the cell membrane. This is XK-related protein 7 from Rattus norvegicus (Rat).